A 226-amino-acid chain; its full sequence is Orotidine 5'-phosphate decarboxylase (226 aa).

Substrate contacts are provided by residues Asp8, Lys30, 58–67 (DLKIHDIPNT), Thr117, Arg177, Gln186, Gly206, and Arg207. Lys60 acts as the Proton donor in catalysis.

Belongs to the OMP decarboxylase family. Type 1 subfamily. In terms of assembly, homodimer.

The enzyme catalyses orotidine 5'-phosphate + H(+) = UMP + CO2. It participates in pyrimidine metabolism; UMP biosynthesis via de novo pathway; UMP from orotate: step 2/2. Catalyzes the decarboxylation of orotidine 5'-monophosphate (OMP) to uridine 5'-monophosphate (UMP). This is Orotidine 5'-phosphate decarboxylase from Campylobacter jejuni subsp. jejuni serotype O:6 (strain 81116 / NCTC 11828).